A 468-amino-acid chain; its full sequence is MIKRERIVKSVLAHVPKDAINQFVSRGSTPTSFSVLFMAAIVGTLAGLVGTYFEIAVHFVSETRTEWLKSEIGSVLPLWLAAILISGALAFIGYYLVNRFAPEASGSGIPEIEGAMDNIRSVRWWRVIPVKFFGGMGALGSGMVLGREGPTVQMGGAVGRMVTDIFRVKDDDTRHSLLASGAAGGLAAAFNAPLAAIMFVVEEMRPQFRYSLISIRAVIISAIMANIVFRAINGQEAVITMPQYQSPELQSLWLFLLLGSLFGVFGVVFNKLITIAQDSFVALHKNDRKRYLITGTILGGVFGLLLLYVPQLTGGGIGLIPDITNGNYSISILVMLFVGRVITTLLCFGSGAPGGIFAPMLALGTLFGYAFGASADMLLPSLTIEPGVFAIAGMGALFAATVRAPITGILLVIEMTNNYYLILPLIITSLGAVIVAQLLGGQPIYSQLLHRTLKNDKLRQQDLPENQA.

The Cytoplasmic portion of the chain corresponds to 1–32 (MIKRERIVKSVLAHVPKDAINQFVSRGSTPTS). The chain crosses the membrane as a helical span at residues 33–69 (FSVLFMAAIVGTLAGLVGTYFEIAVHFVSETRTEWLK). Topologically, residues 70 to 76 (SEIGSVL) are periplasmic. Residues 77 to 100 (PLWLAAILISGALAFIGYYLVNRF) form a helical membrane-spanning segment. The Selectivity filter part_1 motif lies at 106–110 (GSGIP). Serine 107 contacts chloride. The segment at residues 109-116 (IPEIEGAM) is an intramembrane region (helical). Residues 117-123 (DNIRSVR) lie on the Cytoplasmic side of the membrane. Helical transmembrane passes span 124-141 (WWRV…ALGS) and 148-166 (EGPT…TDIF). The short motif at 146–150 (GREGP) is the Selectivity filter part_2 element. The Cytoplasmic segment spans residues 167-176 (RVKDDDTRHS). Intramembrane regions (helical) lie at residues 177-189 (LLAS…LAAA) and 193-201 (PLAAIMFVV). Over 202–214 (EEMRPQFRYSLIS) the chain is Cytoplasmic. The chain crosses the membrane as a helical span at residues 215 to 232 (IRAVIISAIMANIVFRAI). At 233-252 (NGQEAVITMPQYQSPELQSL) the chain is on the periplasmic side. A helical transmembrane segment spans residues 253-281 (WLFLLLGSLFGVFGVVFNKLITIAQDSFV). At 282-287 (ALHKND) the chain is on the cytoplasmic side. The chain crosses the membrane as a helical span at residues 288–309 (RKRYLITGTILGGVFGLLLLYV). At 310 to 329 (PQLTGGGIGLIPDITNGNYS) the chain is on the periplasmic side. The next 2 membrane-spanning stretches (helical) occupy residues 330 to 349 (ISIL…LCFG) and 355 to 376 (GIFA…ASAD). Residues 355-359 (GIFAP) carry the Selectivity filter part_3 motif. The chloride site is built by isoleucine 356 and phenylalanine 357. At 377 to 386 (MLLPSLTIEP) the chain is on the periplasmic side. The segment at residues 387–401 (GVFAIAGMGALFAAT) is an intramembrane region (helical). Residues 402–404 (VRA) constitute an intramembrane region (note=Loop between two helices). The helical intramembrane region spans 405–416 (PITGILLVIEMT). Residues 417 to 421 (NNYYL) constitute an intramembrane region (note=Loop between two helices). Residues 422 to 438 (ILPLIITSLGAVIVAQL) form a helical membrane-spanning segment. The Cytoplasmic portion of the chain corresponds to 439–468 (LGGQPIYSQLLHRTLKNDKLRQQDLPENQA). Tyrosine 445 contributes to the chloride binding site.

The protein belongs to the chloride channel (TC 2.A.49) family. ClcA subfamily. As to quaternary structure, homodimer.

The protein localises to the cell inner membrane. It catalyses the reaction 2 chloride(in) + H(+)(out) = 2 chloride(out) + H(+)(in). Proton-coupled chloride transporter. Functions as antiport system and exchanges two chloride ions for 1 proton. Probably acts as an electrical shunt for an outwardly-directed proton pump that is linked to amino acid decarboxylation, as part of the extreme acid resistance (XAR) response. This Vibrio campbellii (strain ATCC BAA-1116) protein is H(+)/Cl(-) exchange transporter ClcA.